Reading from the N-terminus, the 118-residue chain is Ribonuclease P protein component (118 aa).

This sequence belongs to the RnpA family. In terms of assembly, consists of a catalytic RNA component (M1 or rnpB) and a protein subunit.

The catalysed reaction is Endonucleolytic cleavage of RNA, removing 5'-extranucleotides from tRNA precursor.. RNaseP catalyzes the removal of the 5'-leader sequence from pre-tRNA to produce the mature 5'-terminus. It can also cleave other RNA substrates such as 4.5S RNA. The protein component plays an auxiliary but essential role in vivo by binding to the 5'-leader sequence and broadening the substrate specificity of the ribozyme. The polypeptide is Ribonuclease P protein component (Vibrio campbellii (strain ATCC BAA-1116)).